The following is a 579-amino-acid chain: MKKYWHKLSFLQKNVLLTVLVILTLVGTMGALSFNMFQNSMMSIFERHSFETGDTVLHKLDEEIVRDVTKDPVAQREKREKLTEKLDEATEELNSVGQTYIVGAKKNEKGELLIVDLSTDLANVVEVRPGEYYKQPDLWMEAYDKVMSTKKANMTVVYEDLLGTWVTILEPIKDGEGNIVAIVAADVDASIVPSTKEKFIIQGLMFICISVLIATVIQFLIVRNALAPLRDLREGLRRVGEGDLNIKLEERSDDIGIINSYFNNTIEKFKGIIDKVKQTAEQVSSSSQELSVSTKENSMAVQEIVSSMVELRAGAQLQETSVPQYLGIVYEVEDKMEEITNAAKQMEKVSEGIEHHSVKGNGVTKQAINQMNIIQNAVQDLSSIIYSLEVRSKEISDIVTVITSISNQTNSLALHATIEASRAEETGEGFAVVADEVRKLAEQMEASAKDIANLIGETQAGTEEAVVSIRKASKEVESGMKLVEMNGAFFEEISKSAQSVTNQVRVVSSNSSDILQNSQNIVRVVNELSLIANTYTNSSSNVEESMKEQEMSVQDIAELASSLSWLSQELQELIGEFKS.

Residues 1-13 (MKKYWHKLSFLQK) lie on the Cytoplasmic side of the membrane. The chain crosses the membrane as a helical span at residues 14–34 (NVLLTVLVILTLVGTMGALSF). Over 35–198 (NMFQNSMMSI…ASIVPSTKEK (164 aa)) the chain is Extracellular. Residues 199-219 (FIIQGLMFICISVLIATVIQF) traverse the membrane as a helical segment. At 220–579 (LIVRNALAPL…LQELIGEFKS (360 aa)) the chain is on the cytoplasmic side. Residues 223–274 (RNALAPLRDLREGLRRVGEGDLNIKLEERSDDIGIINSYFNNTIEKFKGIID) enclose the HAMP domain. Glutamate 289 is modified (glutamate methyl ester (Glu)). One can recognise a Methyl-accepting transducer domain in the interval 293 to 529 (STKENSMAVQ…NIVRVVNELS (237 aa)). Residue glutamate 548 is modified to Glutamate methyl ester (Glu).

The protein belongs to the methyl-accepting chemotaxis (MCP) protein family.

It localises to the cell membrane. Its function is as follows. Chemotactic-signal transducers respond to changes in the concentration of attractants and repellents in the environment, transduce a signal from the outside to the inside of the cell, and facilitate sensory adaptation through the variation of the level of methylation. This chain is Probable methyl-accepting chemotaxis protein BT9727_0355, found in Bacillus thuringiensis subsp. konkukian (strain 97-27).